Consider the following 78-residue polypeptide: Large ribosomal subunit protein bL28 (78 aa).

Belongs to the bacterial ribosomal protein bL28 family.

The protein is Large ribosomal subunit protein bL28 of Nostoc sp. (strain PCC 7120 / SAG 25.82 / UTEX 2576).